The primary structure comprises 294 residues: Diaminopimelate epimerase (294 aa).

Substrate-binding residues include asparagine 13, glutamine 46, and asparagine 69. Catalysis depends on cysteine 78, which acts as the Proton donor. Residues 79 to 80 (GN), asparagine 173, asparagine 206, and 224 to 225 (ER) contribute to the substrate site. Catalysis depends on cysteine 233, which acts as the Proton acceptor. Position 234-235 (234-235 (GT)) interacts with substrate.

Belongs to the diaminopimelate epimerase family. Homodimer.

The protein resides in the cytoplasm. It carries out the reaction (2S,6S)-2,6-diaminopimelate = meso-2,6-diaminopimelate. Its pathway is amino-acid biosynthesis; L-lysine biosynthesis via DAP pathway; DL-2,6-diaminopimelate from LL-2,6-diaminopimelate: step 1/1. In terms of biological role, catalyzes the stereoinversion of LL-2,6-diaminopimelate (L,L-DAP) to meso-diaminopimelate (meso-DAP), a precursor of L-lysine and an essential component of the bacterial peptidoglycan. This Variovorax paradoxus (strain S110) protein is Diaminopimelate epimerase.